Reading from the N-terminus, the 291-residue chain is Taste receptor type 2 member 16 (291 aa).

Residue Met-1 is a topological domain, extracellular. Residues 2 to 22 (IPIQLTVFFMIIYVLESLTII) form a helical membrane-spanning segment. Residues 23–41 (VQSSLIVAVLGREWLQVRR) lie on the Cytoplasmic side of the membrane. Residues 42-62 (LMPVDMILISLGISRFCLQWA) form a helical membrane-spanning segment. Residues 63–84 (SMLNNFCSYFNLNYVLCNLTIT) lie on the Extracellular side of the membrane. Asn-80 carries an N-linked (GlcNAc...) asparagine glycan. Residues 85 to 105 (WEFFNILTFWLNSLLTVFYCI) form a helical membrane-spanning segment. The Cytoplasmic segment spans residues 106-125 (KASSFTHHIFLWLRWRILRL). The helical transmembrane segment at 126-146 (FPWILLGSLMITCVTIIPSAI) threads the bilayer. At 147-182 (GNYIQIQLLTMEHLPRNSTVTDKLEKFHQYQFQAHT) the chain is on the extracellular side. Asn-163 carries N-linked (GlcNAc...) asparagine glycosylation. A helical transmembrane segment spans residues 183–203 (VALVIPFILFLASTILLMASL). The Cytoplasmic portion of the chain corresponds to 204-228 (TKQIQHHSTGHCNPSMKAHFTALRS). The chain crosses the membrane as a helical span at residues 229 to 249 (LAVLFIVFTSYFLTILITIIG). At 250-257 (TLFDKRCW) the chain is on the extracellular side. The chain crosses the membrane as a helical span at residues 258-278 (LWVWEAFVYAFILMHSTSLML). The Cytoplasmic segment spans residues 279–291 (SSPTLKRILKGKC).

This sequence belongs to the G-protein coupled receptor T2R family. Interacts with RTP3 and RTP4.

It is found in the cell membrane. Its function is as follows. Receptor that may play a role in the perception of bitterness and is gustducin-linked. May play a role in sensing the chemical composition of the gastrointestinal content. The activity of this receptor may stimulate alpha gustducin, mediate PLC-beta-2 activation and lead to the gating of TRPM5. The sequence is that of Taste receptor type 2 member 16 (TAS2R16) from Pan paniscus (Pygmy chimpanzee).